Reading from the N-terminus, the 565-residue chain is Augmin complex subunit dgt3 (565 aa).

Coiled-coil stretches lie at residues 135 to 171 and 212 to 241; these read ELQL…AKKA and QDYD…IQFY.

It belongs to the HAUS3 family. As to quaternary structure, component of the augmin complex composed of dgt2, dgt3, dgt4, dgt5, dgt6, msd1, msd5 and wac. The complex interacts directly or indirectly with microtubules and is required for centrosome-independent generation of spindle microtubules.

It is found in the cytoplasm. Its subcellular location is the cytoskeleton. The protein resides in the spindle. Functionally, as part of the augmin complex, plays a role in centrosome-independent generation of spindle microtubules. The complex is required for mitotic spindle assembly through its involvement in localizing gamma-tubulin to spindle microtubules. In Drosophila melanogaster (Fruit fly), this protein is Augmin complex subunit dgt3.